Consider the following 493-residue polypeptide: Cysteine sulfinic acid decarboxylase (493 aa).

Lysine 305 is modified (N6-(pyridoxal phosphate)lysine).

This sequence belongs to the group II decarboxylase family. Homodimer. The cofactor is pyridoxal 5'-phosphate. Expressed in kidney and liver not detected in lymphoid tissues and lung. Expressed in kidney, liver and brain. 7 and 4 times higher expression in kidney and liver than in brain, respectively. Low level of detection in skeletal muscle. Expressed in brain, olfactory bulb, liver, skeletal muscle and kidney with the highest expression in liver and lowest in skeletal muscle (at protein level).

It carries out the reaction L-aspartate + H(+) = beta-alanine + CO2. The catalysed reaction is 3-sulfino-L-alanine + H(+) = hypotaurine + CO2. It catalyses the reaction L-cysteate + H(+) = taurine + CO2. The protein operates within organosulfur biosynthesis; taurine biosynthesis; hypotaurine from L-cysteine: step 2/2. Its activity is regulated as follows. Activated by Mn(2+). Inhibited by bis-carboxymethyl-trithiocarbonate, ethylxanthogenacetic acid and 2,5-disulfoaniline. Not affected by Li(+) within 0.05-40 mM concentration range. Catalyzes the decarboxylation of L-aspartate, 3-sulfino-L-alanine (cysteine sulfinic acid), and L-cysteate to beta-alanine, hypotaurine and taurine, respectively. The preferred substrate is 3-sulfino-L-alanine. Does not exhibit any decarboxylation activity toward glutamate. This is Cysteine sulfinic acid decarboxylase from Mus musculus (Mouse).